The sequence spans 253 residues: Large ribosomal subunit protein uL4 (253 aa).

The interval 62–107 (WGSGRGVSHVPRLKNSSRAARVPHAKGGRRAHPPKPEADRSEKVNT) is disordered. A compositionally biased stretch (basic residues) spans 82–94 (RVPHAKGGRRAHP). The segment covering 95-107 (PKPEADRSEKVNT) has biased composition (basic and acidic residues).

The protein belongs to the universal ribosomal protein uL4 family. In terms of assembly, part of the 50S ribosomal subunit.

In terms of biological role, one of the primary rRNA binding proteins, this protein initially binds near the 5'-end of the 23S rRNA. It is important during the early stages of 50S assembly. It makes multiple contacts with different domains of the 23S rRNA in the assembled 50S subunit and ribosome. Forms part of the polypeptide exit tunnel. The sequence is that of Large ribosomal subunit protein uL4 from Methanosarcina mazei (strain ATCC BAA-159 / DSM 3647 / Goe1 / Go1 / JCM 11833 / OCM 88) (Methanosarcina frisia).